A 402-amino-acid chain; its full sequence is TBC1 domain family member 20 (402 aa).

Positions 1–27 are disordered; it reads MALRPSKGDGSAGRWDRGAGKADFNAK. Residues 14 to 26 show a composition bias toward basic and acidic residues; sequence RWDRGAGKADFNA. A Rab-GAP TBC domain is found at 59-245; that stretch reads LLTDEIRCQV…RLYDFFLACH (187 aa). 2 consecutive transmembrane segments (helical) span residues 237-257 and 366-386; these read LYDF…AVIV and FVKL…LAVV.

The protein resides in the membrane. In terms of biological role, GTPase-activating protein specific for Rab1 and Rab2 small GTPase families for which it can accelerate the intrinsic GTP hydrolysis rate by more than five orders of magnitude. Also shows GAP activity for RAB18 GTPase. Promotes RAB18 dissociation from the endoplasmic reticulum (ER) membrane into the cytosol, probably through stimulating RAB18 GTP-hydrolysis. Involved in maintaining endoplasmic reticulum structure. The chain is TBC1 domain family member 20 from Mus musculus (Mouse).